The following is a 314-amino-acid chain: Deoxymugineic acid synthase 1 (314 aa).

Asp-44 is a binding site for NADP(+). Tyr-49 acts as the Proton donor in catalysis. His-112 provides a ligand contact to substrate. NADP(+) is bound by residues 158–159, Gln-180, 258–266, and 273–281; these read CN, FDEGRMKEN, and ELSEEERQR.

It belongs to the aldo/keto reductase family.

The catalysed reaction is 2'-deoxymugineate + NAD(+) = 3''-deamino-3''-oxonicotianamine + NADH + H(+). It carries out the reaction 2'-deoxymugineate + NADP(+) = 3''-deamino-3''-oxonicotianamine + NADPH + H(+). Its pathway is siderophore biosynthesis. In terms of biological role, catalyzes the reduction of a 3''-keto intermediate during the biosynthesis of 2'-deoxymugineic acid (DMA) from L-Met. Involved in the formation of phytosiderophores (MAs) belonging to the mugineic acid family and required to acquire iron. The polypeptide is Deoxymugineic acid synthase 1 (Zea mays (Maize)).